The sequence spans 694 residues: Scarecrow-like protein 33 (694 aa).

Residues 289 to 313 (PAKASTFSKSPKGEKPEASGNSYTK) are disordered. Residues 309 to 692 (NSYTKETPDL…RIVYGSSIWV (384 aa)) enclose the GRAS domain. The segment at 316–376 (PDLRTMLVSC…EARLAGIGTQ (61 aa)) is leucine repeat I (LRI). A VHIID region spans residues 395–462 (YQTYISVCPF…GSSCKLRITG (68 aa)). Residues 428–432 (IHIID) carry the VHIID motif. The leucine repeat II (LRII) stretch occupies residues 478–510 (ETGRRLAKYCQKFNIPFEYNAIAQKWESIKLED). The tract at residues 519–613 (VAVNSLFRFR…KEFYGREIMN (95 aa)) is PFYRE. The tract at residues 616–692 (ACEGTERVER…RIVYGSSIWV (77 aa)) is SAW.

This sequence belongs to the GRAS family. As to quaternary structure, interacts with SNRNP35.

Its subcellular location is the nucleus. In terms of biological role, probable transcription factor involved in plant development. The protein is Scarecrow-like protein 33 (SCL33) of Arabidopsis thaliana (Mouse-ear cress).